Reading from the N-terminus, the 701-residue chain is Ribosomal RNA large subunit methyltransferase K/L (701 aa).

The region spanning 43–154 (LLYQSLMWSR…KETAHISLDL (112 aa)) is the THUMP domain.

It belongs to the methyltransferase superfamily. RlmKL family.

It is found in the cytoplasm. It catalyses the reaction guanosine(2445) in 23S rRNA + S-adenosyl-L-methionine = N(2)-methylguanosine(2445) in 23S rRNA + S-adenosyl-L-homocysteine + H(+). It carries out the reaction guanosine(2069) in 23S rRNA + S-adenosyl-L-methionine = N(2)-methylguanosine(2069) in 23S rRNA + S-adenosyl-L-homocysteine + H(+). In terms of biological role, specifically methylates the guanine in position 2445 (m2G2445) and the guanine in position 2069 (m7G2069) of 23S rRNA. The protein is Ribosomal RNA large subunit methyltransferase K/L of Klebsiella pneumoniae subsp. pneumoniae (strain ATCC 700721 / MGH 78578).